Here is a 401-residue protein sequence, read N- to C-terminus: 4-hydroxy-3-methylbut-2-enyl diphosphate reductase (401 aa).

C66 contacts [4Fe-4S] cluster. H96 is a binding site for (2E)-4-hydroxy-3-methylbut-2-enyl diphosphate. H96 lines the dimethylallyl diphosphate pocket. H96 provides a ligand contact to isopentenyl diphosphate. C157 contacts [4Fe-4S] cluster. Position 185 (H185) interacts with (2E)-4-hydroxy-3-methylbut-2-enyl diphosphate. Dimethylallyl diphosphate is bound at residue H185. H185 is an isopentenyl diphosphate binding site. E187 (proton donor) is an active-site residue. T250 lines the (2E)-4-hydroxy-3-methylbut-2-enyl diphosphate pocket. C288 lines the [4Fe-4S] cluster pocket. Residues S317, S318, N319, and S379 each coordinate (2E)-4-hydroxy-3-methylbut-2-enyl diphosphate. Residues S317, S318, N319, and S379 each contribute to the dimethylallyl diphosphate site. Isopentenyl diphosphate-binding residues include S317, S318, N319, and S379.

This sequence belongs to the IspH family. [4Fe-4S] cluster serves as cofactor.

The enzyme catalyses isopentenyl diphosphate + 2 oxidized [2Fe-2S]-[ferredoxin] + H2O = (2E)-4-hydroxy-3-methylbut-2-enyl diphosphate + 2 reduced [2Fe-2S]-[ferredoxin] + 2 H(+). It carries out the reaction dimethylallyl diphosphate + 2 oxidized [2Fe-2S]-[ferredoxin] + H2O = (2E)-4-hydroxy-3-methylbut-2-enyl diphosphate + 2 reduced [2Fe-2S]-[ferredoxin] + 2 H(+). The protein operates within isoprenoid biosynthesis; dimethylallyl diphosphate biosynthesis; dimethylallyl diphosphate from (2E)-4-hydroxy-3-methylbutenyl diphosphate: step 1/1. It participates in isoprenoid biosynthesis; isopentenyl diphosphate biosynthesis via DXP pathway; isopentenyl diphosphate from 1-deoxy-D-xylulose 5-phosphate: step 6/6. In terms of biological role, catalyzes the conversion of 1-hydroxy-2-methyl-2-(E)-butenyl 4-diphosphate (HMBPP) into a mixture of isopentenyl diphosphate (IPP) and dimethylallyl diphosphate (DMAPP). Acts in the terminal step of the DOXP/MEP pathway for isoprenoid precursor biosynthesis. This is 4-hydroxy-3-methylbut-2-enyl diphosphate reductase from Trichodesmium erythraeum (strain IMS101).